The sequence spans 240 residues: Putative exosome complex component RRP41 (240 aa).

It belongs to the RNase PH family. As to quaternary structure, component of the RNA exosome complex.

It is found in the cytoplasm. Its subcellular location is the nucleus. It localises to the nucleolus. The protein resides in the nucleoplasm. Functionally, non-catalytic component of the RNA exosome complex which has 3'-&gt;5' exoribonuclease activity and participates in a multitude of cellular RNA processing and degradation events. The polypeptide is Putative exosome complex component RRP41 (exos-4.1) (Caenorhabditis briggsae).